A 198-amino-acid chain; its full sequence is GTP-binding protein RHO1 (198 aa).

GTP is bound at residue Gly-16–Thr-23. The short motif at Tyr-38–Tyr-46 is the Effector region element. Residues Asp-63–Gln-67 and Cys-121–Asp-124 each bind GTP. Residue Cys-195 is modified to Cysteine methyl ester. The S-geranylgeranyl cysteine moiety is linked to residue Cys-195. Residues Val-196–Leu-198 constitute a propeptide, removed in mature form.

The protein belongs to the small GTPase superfamily. Rho family.

It is found in the cell membrane. The chain is GTP-binding protein RHO1 (RHO1) from Candida albicans (strain SC5314 / ATCC MYA-2876) (Yeast).